Reading from the N-terminus, the 212-residue chain is Thymidylate kinase (212 aa).

11–18 provides a ligand contact to ATP; the sequence is GPEGAGKT.

It belongs to the thymidylate kinase family.

The enzyme catalyses dTMP + ATP = dTDP + ADP. Its function is as follows. Phosphorylation of dTMP to form dTDP in both de novo and salvage pathways of dTTP synthesis. The sequence is that of Thymidylate kinase from Streptococcus pneumoniae (strain Hungary19A-6).